The following is a 217-amino-acid chain: MSTANRTFTGLLGTKLGMTQVWDENNKLIPVTVVQITPNVVTQVRTPEVDGYGAIQIAYGQIDPRKADKPSTGHFDKAGVTPRRHLTEVRTADFAEYALGQEITVGAFEPGTKVDVVGTSKGKGFAGVMKRHNFKGVSASHGSHRNHRKPGSIGASSTPSRVFKGMRMAGRMGGERVTVLNLVVHSVDAEKGLLLVKGAVPGARGRIVFVRNAVKGK.

Residues 137–160 form a disordered region; it reads VSASHGSHRNHRKPGSIGASSTPS.

This sequence belongs to the universal ribosomal protein uL3 family. As to quaternary structure, part of the 50S ribosomal subunit. Forms a cluster with proteins L14 and L19.

Its function is as follows. One of the primary rRNA binding proteins, it binds directly near the 3'-end of the 23S rRNA, where it nucleates assembly of the 50S subunit. This is Large ribosomal subunit protein uL3 from Clavibacter michiganensis subsp. michiganensis (strain NCPPB 382).